The chain runs to 62 residues: Prokaryotic ubiquitin-like protein Pup 2 (62 aa).

A disordered region spans residues 1–34; that stretch reads MRQEKPKRHGREDDEPPEPAPAGRARDTTVGDDT. The ARC ATPase binding stretch occupies residues 21 to 56; that stretch reads PAGRARDTTVGDDTDELLDEIDGVLEENAVEFVRSY. Glu62 participates in a covalent cross-link: Isoglutamyl lysine isopeptide (Glu-Lys) (interchain with K-? in acceptor proteins).

It belongs to the prokaryotic ubiquitin-like protein family. Strongly interacts with the proteasome-associated ATPase ARC through a hydrophobic interface; the interacting region of Pup lies in its C-terminal half. There is one Pup binding site per ARC hexamer ring.

It functions in the pathway protein degradation; proteasomal Pup-dependent pathway. Its function is as follows. Protein modifier that is covalently attached to lysine residues of substrate proteins, thereby targeting them for proteasomal degradation. The tagging system is termed pupylation. This is Prokaryotic ubiquitin-like protein Pup 2 from Saccharopolyspora erythraea (strain ATCC 11635 / DSM 40517 / JCM 4748 / NBRC 13426 / NCIMB 8594 / NRRL 2338).